A 166-amino-acid chain; its full sequence is Telethonin (166 aa).

Phosphoserine is present on serine 39. The interval 145 to 166 (VSKPGTLRRSLSRSMSQEAQRG) is disordered. Over residues 156-166 (SRSMSQEAQRG) the composition is skewed to polar residues.

Interacts with MYOZ1, MYOZ2 and MYOZ3. Interacts with CSRP3. Interacts directly with the N-terminal Ig-like domains of 2 titin (TTN) molecules. Interacts with ANKRD2; the interaction is direct.

Its subcellular location is the cytoplasm. It localises to the myofibril. The protein resides in the sarcomere. In terms of biological role, muscle assembly regulating factor. Mediates the antiparallel assembly of titin (TTN) molecules at the sarcomeric Z-disk. The polypeptide is Telethonin (TCAP) (Bos taurus (Bovine)).